We begin with the raw amino-acid sequence, 130 residues long: Large ribosomal subunit protein bL20c (130 aa).

This sequence belongs to the bacterial ribosomal protein bL20 family.

It is found in the plastid. The protein resides in the chloroplast. Binds directly to 23S ribosomal RNA and is necessary for the in vitro assembly process of the 50S ribosomal subunit. It is not involved in the protein synthesizing functions of that subunit. The sequence is that of Large ribosomal subunit protein bL20c from Fagopyrum esculentum subsp. ancestrale (Wild buckwheat).